A 436-amino-acid chain; its full sequence is UPF0597 protein YhaM (436 aa).

The protein belongs to the UPF0597 family.

This is UPF0597 protein YhaM from Shigella dysenteriae serotype 1 (strain Sd197).